The primary structure comprises 175 residues: Glutamyl-tRNA(Gln) amidotransferase subunit F, mitochondrial (175 aa).

The N-terminal 19 residues, 1 to 19 (MLKVSARHAPVLRLPRRFY), are a transit peptide targeting the mitochondrion.

Belongs to the GatF family. As to quaternary structure, subunit of the heterotrimeric GatFAB amidotransferase (AdT) complex, composed of A, B and F subunits.

The protein localises to the mitochondrion inner membrane. The enzyme catalyses L-glutamyl-tRNA(Gln) + L-glutamine + ATP + H2O = L-glutaminyl-tRNA(Gln) + L-glutamate + ADP + phosphate + H(+). Functionally, allows the formation of correctly charged Gln-tRNA(Gln) through the transamidation of misacylated Glu-tRNA(Gln) in the mitochondria. The reaction takes place in the presence of glutamine and ATP through an activated gamma-phospho-Glu-tRNA(Gln). Required for proper protein synthesis within the mitochondrion. The polypeptide is Glutamyl-tRNA(Gln) amidotransferase subunit F, mitochondrial (Lachancea thermotolerans (strain ATCC 56472 / CBS 6340 / NRRL Y-8284) (Yeast)).